We begin with the raw amino-acid sequence, 21 residues long: Phenol-soluble modulin alpha 1 peptide (21 aa).

This sequence belongs to the phenol-soluble modulin alpha peptides family.

Functionally, peptide which can recruit, activate and subsequently lyse human neutrophils, thus eliminating the main cellular defense against infection. The polypeptide is Phenol-soluble modulin alpha 1 peptide (psmA1) (Staphylococcus aureus (strain Mu3 / ATCC 700698)).